Consider the following 70-residue polypeptide: uncharacterized protein (70 aa).

The tract at residues 40-70 (LHQQRTAHKVTSPPSQRPQNSETKSDSQNRS) is disordered. The segment covering 51 to 61 (SPPSQRPQNSE) has biased composition (polar residues).

This is an uncharacterized protein from Bdellovibrio phage phiMH2K (Bacteriophage phiMH2K).